Consider the following 440-residue polypeptide: 5-hydroxytryptamine receptor 6 (440 aa).

At Met1–Gly27 the chain is on the extracellular side. Residues Trp28–Cys52 traverse the membrane as a helical segment. Residues Thr53 to Asn62 are Cytoplasmic-facing. A helical transmembrane segment spans residues Phe63 to Leu88. The Extracellular portion of the chain corresponds to Tyr89–Arg96. The chain crosses the membrane as a helical span at residues Gly97–Leu122. The cysteines at positions 99 and 180 are disulfide-linked. Asp106 lines the serotonin pocket. The Cytoplasmic segment spans residues Asp123 to Arg142. Residues Ala143–His167 traverse the membrane as a helical segment. At Glu168–Ser185 the chain is on the extracellular side. Residues Leu186 to Cys209 traverse the membrane as a helical segment. Topologically, residues Arg210–Ala266 are cytoplasmic. The helical transmembrane segment at Ser267 to Val293 threads the bilayer. Residue Asn288 coordinates serotonin. At Cys294–Pro299 the chain is on the extracellular side. Residues Gly300–Phe323 form a helical membrane-spanning segment. Residues Met324–Asn440 lie on the Cytoplasmic side of the membrane. Residues Ala346–Leu392 form a disordered region. A compositionally biased stretch (polar residues) spans Ser347–Ser358. Low complexity predominate over residues Pro362 to Pro371.

It belongs to the G-protein coupled receptor 1 family. As to quaternary structure, interacts with MTOR, RPTOR and NF1. Interacts with CDK5.

The protein resides in the cell membrane. Functionally, G-protein coupled receptor for 5-hydroxytryptamine (serotonin), a biogenic hormone that functions as a neurotransmitter, a hormone and a mitogen. Also has a high affinity for tricyclic psychotropic drugs. Ligand binding causes a conformation change that triggers signaling via guanine nucleotide-binding proteins (G proteins) and modulates the activity of downstream effectors. HTR6 is coupled to G(s) G alpha proteins and mediates activation of adenylate cyclase activity. Controls pyramidal neurons migration during corticogenesis, through the regulation of CDK5 activity. Is an activator of mTOR signaling. The sequence is that of 5-hydroxytryptamine receptor 6 (HTR6) from Pan troglodytes (Chimpanzee).